Reading from the N-terminus, the 497-residue chain is Ammonium transporter 1 (497 aa).

At 1-32 (MSSTTDATPTPSGVNGGDSMTVNLNQFYNNGD) the chain is on the extracellular side. The helical transmembrane segment at 33–53 (VAWILTSTALVFIMIPGVGFF) threads the bilayer. Over 54–63 (YSGLARRRSA) the chain is Cytoplasmic. A helical membrane pass occupies residues 64-84 (ISMLFLSMMSVAIVAFQWFFW). Topologically, residues 85–122 (GYSLTFSHEGGPYIGSLANFGLRQTLGRPSSGASSVPD) are extracellular. A helical transmembrane segment spans residues 123–143 (ILFCVFQGMFAAITPALAIGA). The Cytoplasmic segment spans residues 144–150 (AADRGRM). A helical transmembrane segment spans residues 151-171 (FPCMVFMFLWTSIVYDPIAFW). The Extracellular segment spans residues 172–187 (TWNPNGWLNKLGSYDF). A helical transmembrane segment spans residues 188-208 (AGGSPVHISSGMAALAYSIVI). Residues 209–223 (GKRCDHGTTKYRPHN) lie on the Cytoplasmic side of the membrane. The chain crosses the membrane as a helical span at residues 224–244 (VPHVVLGTVFLWFGWFGFNGG). The Extracellular portion of the chain corresponds to 245-253 (SSAAANMRG). Residues 254-274 (VMAVVVTHLAASVGGIVWCVI) form a helical membrane-spanning segment. Topologically, residues 275 to 281 (DFAKNRH) are cytoplasmic. Residues 282–302 (WSVVGFCEGAVAGLVAITPGS) form a helical membrane-spanning segment. G303 is a topological domain (extracellular). A helical transmembrane segment spans residues 304-324 (FVPPWAAVVIGALGAVFCYAA). The Cytoplasmic portion of the chain corresponds to 325-338 (TYLKKIIRVDDALD). The helical transmembrane segment at 339 to 359 (IFAEHGVGGMVGNILTALFAA) threads the bilayer. Over 360 to 394 (DYIEALDGSGTAYTGGWITHHYIQLGYQLADTVSC) the chain is Extracellular. Residues 395-415 (AAYSFAVSCALLFVMNYIPGL) form a helical membrane-spanning segment. Residues 416 to 497 (SLRVSREDEV…AESEAQAPAI (82 aa)) are Cytoplasmic-facing. The disordered stretch occupies residues 440 to 497 (YKDSTDEPPPITTSGVQYTSPTVSDSASNEKEQEHRAQNEAQKEEEYRAESEAQAPAI). Residues 451 to 466 (TTSGVQYTSPTVSDSA) are compositionally biased toward polar residues. Residues 467–490 (SNEKEQEHRAQNEAQKEEEYRAES) are compositionally biased toward basic and acidic residues.

It belongs to the ammonia transporter channel (TC 1.A.11.2) family.

It localises to the membrane. In terms of biological role, transporter for ammonium to use as a nitrogen source. Under ammonium limitation acts as an ammonium sensor, generating a signal that leads to pseudohyphal growth. This is Ammonium transporter 1 (amt1) from Schizosaccharomyces pombe (strain 972 / ATCC 24843) (Fission yeast).